The chain runs to 426 residues: Cell adhesion molecule CEACAM16 (426 aa).

The signal sequence occupies residues Met1–Ala22. A glycan (N-linked (GlcNAc...) asparagine) is linked at Asn38. Positions Glu77–Asp96 are disordered. A compositionally biased stretch (basic and acidic residues) spans Thr84 to Leu95. 2 Ig-like C2-type domains span residues Pro134–Thr219 and Pro224–Val310. A disulfide bridge links Cys155 with Cys202. The N-linked (GlcNAc...) asparagine glycan is linked to Asn217. Residues Cys253 and Cys294 are joined by a disulfide bond.

Belongs to the immunoglobulin superfamily. CEA family. In terms of assembly, homooligomer; can for homodimers and homotetramers. Interacts with TECTA and TECTB. In terms of tissue distribution, expressed in cochlear outer hair cells (OHC).

It is found in the secreted. Functionally, required for proper hearing, plays a role in maintaining the integrity of the tectorial membrane. In Mus musculus (Mouse), this protein is Cell adhesion molecule CEACAM16.